The chain runs to 245 residues: Uridylate kinase (245 aa).

15 to 18 (KLSG) is a binding site for ATP. An involved in allosteric activation by GTP region spans residues 23–28 (GEEGFG). Gly-57 lines the UMP pocket. Residues Gly-58 and Arg-62 each contribute to the ATP site. Residues Asp-77 and 138–145 (TGNPFCTT) contribute to the UMP site. Thr-165, Tyr-171, and Asp-174 together coordinate ATP.

This sequence belongs to the UMP kinase family. As to quaternary structure, homohexamer.

It is found in the cytoplasm. The catalysed reaction is UMP + ATP = UDP + ADP. It participates in pyrimidine metabolism; CTP biosynthesis via de novo pathway; UDP from UMP (UMPK route): step 1/1. With respect to regulation, allosterically activated by GTP. Inhibited by UTP. Catalyzes the reversible phosphorylation of UMP to UDP. This is Uridylate kinase from Shewanella putrefaciens (strain CN-32 / ATCC BAA-453).